The sequence spans 374 residues: Speckle-type POZ protein A (374 aa).

The region spanning 31 to 161 (KFSYMWTINN…DDKLTLFCEV (131 aa)) is the MATH domain. The segment at 71 to 191 (VNPKGLDEES…PECRLADELG (121 aa)) is required for nuclear localization. Residues 173–297 (QNTMNMVKVP…MCEEALCSNL (125 aa)) enclose the BTB domain. Residues 297–355 (LSVENAAEILILADLHSADQLKTQAVDFINYHASDVMETSGWKSMVVSHPHLVAEAYRS) form a homodimerization region.

Belongs to the Tdpoz family. As to quaternary structure, homodimer. Part of cullin-RING-based BCR (BTB-CUL3-RBX1) E3 ubiquitin-protein ligase complexes that contain CUL3 and SPOP, plus a target protein.

The protein resides in the nucleus. Its subcellular location is the nucleus speckle. It functions in the pathway protein modification; protein ubiquitination. Component of a cullin-RING-based BCR (BTB-CUL3-RBX1) E3 ubiquitin-protein ligase complex that mediates the ubiquitination of target proteins, leading most often to their proteasomal degradation. The protein is Speckle-type POZ protein A (spop-a) of Xenopus laevis (African clawed frog).